The primary structure comprises 1214 residues: Inner capsid protein VP3 (1214 aa).

The tract at residues 1–80 is disordered; it reads MPRRSARKAQ…SVNNDGDIIT (80 aa). Residues 8-18 are compositionally biased toward polar residues; it reads KAQSATASPAD. The segment covering 28–51 has biased composition (low complexity); the sequence is PTTNSPPSTTSPNQAAADANQQQA. Residues 117 to 140 form a C2H2-type zinc finger; the sequence is YVCNVCNARFSTMSALSEHLRSDH.

Belongs to the turreted BTV-fold inner capsid family. In terms of assembly, homodecamer; each decamer is made up of two conformers of VP2, called VP2A and VP2B. 12 homodecamers assemble to form an icosahedral capsid. Interacts with VP6.

Its subcellular location is the virion. Its function is as follows. Inner capsid protein that self-assembles to form an icosahedral capsid with a T=2 symmetry, which consists of 120 copies of VP2, with channels at each of its five-fold vertices. This capsid constitutes the innermost concentric layer of the viral mature particle. The sequence is that of Inner capsid protein VP3 (S3) from Notemigonus crysoleucas (Golden shiner).